The chain runs to 118 residues: Large ribosomal subunit protein uL18 (118 aa).

The protein belongs to the universal ribosomal protein uL18 family. Part of the 50S ribosomal subunit; part of the 5S rRNA/L5/L18/L25 subcomplex. Contacts the 5S and 23S rRNAs.

In terms of biological role, this is one of the proteins that bind and probably mediate the attachment of the 5S RNA into the large ribosomal subunit, where it forms part of the central protuberance. This chain is Large ribosomal subunit protein uL18, found in Rickettsia prowazekii (strain Madrid E).